Consider the following 109-residue polypeptide: uncharacterized protein (109 aa).

The protein resides in the mitochondrion. This is an uncharacterized protein from Saccharomyces cerevisiae (strain ATCC 204508 / S288c) (Baker's yeast).